Here is a 426-residue protein sequence, read N- to C-terminus: Gamma-glutamyl phosphate reductase (426 aa).

This sequence belongs to the gamma-glutamyl phosphate reductase family.

It localises to the cytoplasm. The enzyme catalyses L-glutamate 5-semialdehyde + phosphate + NADP(+) = L-glutamyl 5-phosphate + NADPH + H(+). It functions in the pathway amino-acid biosynthesis; L-proline biosynthesis; L-glutamate 5-semialdehyde from L-glutamate: step 2/2. Functionally, catalyzes the NADPH-dependent reduction of L-glutamate 5-phosphate into L-glutamate 5-semialdehyde and phosphate. The product spontaneously undergoes cyclization to form 1-pyrroline-5-carboxylate. The protein is Gamma-glutamyl phosphate reductase of Paracidovorax citrulli (strain AAC00-1) (Acidovorax citrulli).